Consider the following 123-residue polypeptide: Cliotide T4 (123 aa).

A signal peptide spans 1–28 (MASLRIAPLALFFFLAASVMFTVEKTEA). The segment at residues 29-58 (GIPCGESCVFIPCITAAIGCSCKSKVCYRN) is a cross-link (cyclopeptide (Gly-Asn)). 3 disulfides stabilise this stretch: C32–C48, C36–C50, and C41–C55. Positions 59–123 (HVIAAEAKTM…KDHLKMSITN (65 aa)) are cleaved as a propeptide — removed in mature form.

Contains 3 disulfide bonds. In terms of processing, this is a cyclic peptide. In terms of tissue distribution, expressed in flower, stem, shoot, root, leaf, seed, pod and nodule (at protein level).

Probably participates in a plant defense mechanism. Active against Gram-negative bacteria E.coli ATCC 700926 (MIC=1.0 uM), K.pneumoniae ATTC 13883 (MIC=5.5 uM) and P.aeruginosa ATCC 39018 (MIC=7.5 uM). Has hemolytic and cytotoxic activity. The chain is Cliotide T4 from Clitoria ternatea (Butterfly pea).